The primary structure comprises 171 residues: Probable DNA-directed RNA polymerase subunit delta (171 aa).

Residues 14–81 enclose the HTH HARE-type domain; sequence MALVEIAYEI…SDQTWGLRSW (68 aa). The tract at residues 138-171 is disordered; it reads EFDEIDEADDDELDDLEDEILDDDEDFDEEEDEE.

It belongs to the RpoE family. RNAP is composed of a core of 2 alpha, a beta and a beta' subunits. The core is associated with a delta subunit and one of several sigma factors.

In terms of biological role, participates in both the initiation and recycling phases of transcription. In the presence of the delta subunit, RNAP displays an increased specificity of transcription, a decreased affinity for nucleic acids, and an increased efficiency of RNA synthesis because of enhanced recycling. This Bacillus licheniformis (strain ATCC 14580 / DSM 13 / JCM 2505 / CCUG 7422 / NBRC 12200 / NCIMB 9375 / NCTC 10341 / NRRL NRS-1264 / Gibson 46) protein is Probable DNA-directed RNA polymerase subunit delta.